The chain runs to 132 residues: Acid shock protein (132 aa).

The N-terminal stretch at 1–21 is a signal peptide; it reads MKKVLALIVAATMGLSSVAFA. A propeptide spanning residues 22 to 69 is cleaved from the precursor; that stretch reads AETTAAATAAPAATSTTAAPAVEKAAPAKATHHKKHKATKQTTEQKAQ. Over residues 30-50 the composition is skewed to low complexity; it reads AAPAATSTTAAPAVEKAAPAK. A disordered region spans residues 30 to 132; the sequence is AAPAATSTTA…AKKSATAPAA (103 aa). The span at 51–60 shows a compositional bias: basic residues; the sequence is ATHHKKHKAT. The span at 61–99 shows a compositional bias: low complexity; the sequence is KQTTEQKAQAAKKAVKKAPAQKAQAAKKAVKKAPVQKAQ. A compositionally biased stretch (basic residues) spans 100–124; it reads AAKKHVKKAPAQKAQAAKKHHKTAK.

The protein belongs to the Asr family. Post-translationally, proteolytic processing gives rise to the active protein.

The protein resides in the periplasm. Required for growth and/or survival at acidic conditions. This is Acid shock protein from Yersinia enterocolitica serotype O:8 / biotype 1B (strain NCTC 13174 / 8081).